The chain runs to 197 residues: Proteinase inhibitor type-2 (197 aa).

The first 24 residues, 1-24 (MAVHKVSFVAHLLVLGMFLLLVDA), serve as a signal peptide directing secretion. Repeat copies occupy residues 24–80 (AKAC…DPKN), 81–140 (PNVC…DEPK), and 141–196 (SCTT…PQSA). 8 disulfide bridges follow: Cys27–Cys115, Cys31–Cys111, Cys39–Cys121, Cys51–Cys88, Cys54–Cys72, Cys55–Cys84, Cys61–Cys97, and Cys114–Cys132.

The protein belongs to the protease inhibitor I20 (potato type II proteinase inhibitor) family.

In Nicotiana tabacum (Common tobacco), this protein is Proteinase inhibitor type-2.